A 145-amino-acid chain; its full sequence is Androgenic gland hormone (145 aa).

Positions 1–21 (MKGLLFIVSLLCLTLHQRVWA) are cleaved as a signal peptide. Cystine bridges form between C33-C122, C42-C59, C44-C140, and C123-C131. Residues 68-112 (SADDEDYLFEEDEDDEFFHPRALSPPAAKSGDERLEDEVSFHSRS) constitute a propeptide, c peptide. N-linked (GlcNAc...) asparagine glycosylation is present at N132.

In terms of tissue distribution, androgenic gland.

It localises to the secreted. Its function is as follows. Controls sex differentiation and the formation of male appendages, spermatogenesis, pigmentation, and male specific behavior. This chain is Androgenic gland hormone (AGH), found in Porcellio scaber (Common rough woodlouse).